The chain runs to 407 residues: MDVISELVKKNGSKILLIVLDGLGGLPVKEGKTELELAKTPNLDKLVKNSATGLHIPVDWGITPGSGPGHLGLFGYDPIKYQIGRGILEALGLGIDVKDTDIAVRGNYATVEYRNGKPIVVDRRAGRIPTEENKRITAKLQEAIKEIDGVQVIIKPGMEHRLAIVFRFPEKLSPGSDAINDTDPQQVGKEPLEPKGENPNAEKVAEVVRKFIQRATEILRNEPKANYILLRGFSQKPDIPTMEERFGVKPCCIAVYPMYKGLASLVGMDVIEFEGSTIQDEIDTLKKVWNEYDYFFVHIKKTDSYGEDGNYEGKVSVIEDFDAHLPQFLELKPDVLAITGDHSTPSILKGHSWHPVPLLIHSPYVLGGTSERFTERECLKGELGIIPAVKITQLLLANALRLKKYGA.

The segment at 175-200 (GSDAINDTDPQQVGKEPLEPKGENPN) is disordered.

The protein belongs to the BPG-independent phosphoglycerate mutase family. A-PGAM subfamily.

The enzyme catalyses (2R)-2-phosphoglycerate = (2R)-3-phosphoglycerate. The protein operates within carbohydrate degradation; glycolysis; pyruvate from D-glyceraldehyde 3-phosphate: step 3/5. Its function is as follows. Catalyzes the interconversion of 2-phosphoglycerate and 3-phosphoglycerate. This chain is Probable 2,3-bisphosphoglycerate-independent phosphoglycerate mutase, found in Aquifex aeolicus (strain VF5).